A 504-amino-acid chain; its full sequence is UDP-N-acetylmuramoylalanine--D-glutamate ligase (504 aa).

129–135 (GTNGKTT) is a binding site for ATP.

This sequence belongs to the MurCDEF family.

Its subcellular location is the cytoplasm. It carries out the reaction UDP-N-acetyl-alpha-D-muramoyl-L-alanine + D-glutamate + ATP = UDP-N-acetyl-alpha-D-muramoyl-L-alanyl-D-glutamate + ADP + phosphate + H(+). Its pathway is cell wall biogenesis; peptidoglycan biosynthesis. In terms of biological role, cell wall formation. Catalyzes the addition of glutamate to the nucleotide precursor UDP-N-acetylmuramoyl-L-alanine (UMA). The sequence is that of UDP-N-acetylmuramoylalanine--D-glutamate ligase from Cupriavidus metallidurans (strain ATCC 43123 / DSM 2839 / NBRC 102507 / CH34) (Ralstonia metallidurans).